A 515-amino-acid chain; its full sequence is ATP synthase subunit alpha (515 aa).

171–178 contacts ATP; the sequence is GDRQTGKT.

The protein belongs to the ATPase alpha/beta chains family. In terms of assembly, F-type ATPases have 2 components, CF(1) - the catalytic core - and CF(0) - the membrane proton channel. CF(1) has five subunits: alpha(3), beta(3), gamma(1), delta(1), epsilon(1). CF(0) has three main subunits: a(1), b(2) and c(9-12). The alpha and beta chains form an alternating ring which encloses part of the gamma chain. CF(1) is attached to CF(0) by a central stalk formed by the gamma and epsilon chains, while a peripheral stalk is formed by the delta and b chains.

Its subcellular location is the cell inner membrane. The catalysed reaction is ATP + H2O + 4 H(+)(in) = ADP + phosphate + 5 H(+)(out). Functionally, produces ATP from ADP in the presence of a proton gradient across the membrane. The alpha chain is a regulatory subunit. This Xanthomonas campestris pv. campestris (strain 8004) protein is ATP synthase subunit alpha.